A 288-amino-acid chain; its full sequence is Glandicoline B O-methyltransferase roqN (288 aa).

Residues T57, D82, and 109-110 (DA) contribute to the S-adenosyl-L-methionine site.

It belongs to the class I-like SAM-binding methyltransferase superfamily.

It catalyses the reaction glandicoline B + S-adenosyl-L-methionine = meleagrin + S-adenosyl-L-homocysteine + H(+). It participates in alkaloid biosynthesis. In terms of biological role, glandicoline B O-methyltransferase; part of the gene cluster that mediates the biosynthesis of the mycotoxin meleagrin. The first stage is catalyzed by the dipeptide synthase roqA which condenses histidine and tryptophan to produce histidyltryptophanyldiketopiperazine (HTD). HTD is then converted to roquefortine C through two possible pathways. In the first pathway, prenyltransferase roqD transforms HTD to the intermediate roquefortine D, which is in turn converted to roquefortine C by the cytochrome P450 monooxygenase roqR. In the second pathway, HTD is first converted to the intermediate dehydrohistidyltryptophanyldi-ketopiperazine (DHTD) by roqR which is then prenylated by roqD to form roquefortine C. Roquefortine C can be further transformed to meleagrin via three more reactions including oxydation to glandicolin A by roqM, which is further reduced to glandicoline B by roqO. Finally, glandicoline B is converted to meleagrin by the glandicoline B O-methyltransferase roqN. More studies identified further branching and additional metabolites produced by the roquefortine/meleagrin cluster, including roquefortine F, roquefortine L, roquefortine M, roquefortine N and neoxaline. This is Glandicoline B O-methyltransferase roqN from Penicillium rubens (strain ATCC 28089 / DSM 1075 / NRRL 1951 / Wisconsin 54-1255) (Penicillium chrysogenum).